The following is a 158-amino-acid chain: C-type lectin lectoxin-Thr1 (158 aa).

Positions 1 to 23 are cleaved as a signal peptide; the sequence is MGRFIFATLGLLLVAFSINGAKG. Intrachain disulfides connect C26-C37, C54-C154, and C129-C146. Residues 33–155 enclose the C-type lectin domain; sequence LKGFCYKVFN…CASTRAYLCK (123 aa). The Mannose-binding signature appears at 119-121; it reads EPN. Ca(2+)-binding residues include E127, N142, and D143.

It belongs to the true venom lectin family. In terms of tissue distribution, expressed by the venom gland.

The protein resides in the secreted. In terms of biological role, mannose-binding lectin which recognizes specific carbohydrate structures and agglutinates a variety of animal cells by binding to cell-surface glycoproteins and glycolipids. May be a calcium-dependent lectin. The chain is C-type lectin lectoxin-Thr1 from Thrasops jacksonii (Jackson's black tree snake).